Here is a 162-residue protein sequence, read N- to C-terminus: Deoxyuridine 5'-triphosphate nucleotidohydrolase (162 aa).

Ser11 carries the post-translational modification Phosphoserine. DUTP contacts are provided by residues 83–85 (RSG), 97–103 (GVIDEDY), Gly108, Arg151, and 156–157 (FG).

This sequence belongs to the dUTPase family. In terms of assembly, homotrimer. Mg(2+) serves as cofactor. In terms of processing, phosphorylated in vivo on Ser-11, a reaction that can be catalyzed in vitro by CDC2.

The protein localises to the nucleus. It catalyses the reaction dUTP + H2O = dUMP + diphosphate + H(+). It functions in the pathway pyrimidine metabolism; dUMP biosynthesis; dUMP from dCTP (dUTP route): step 2/2. Functionally, catalyzes the cleavage of 2'-deoxyuridine 5'-triphosphate (dUTP) into 2'-deoxyuridine 5'-monophosphate (dUMP) and inorganic pyrophosphate and through its action efficiently prevents uracil misincorporation into DNA and at the same time provides dUMP, the substrate for de novo thymidylate biosynthesis. Inhibits peroxisome proliferator-activated receptor (PPAR) activity by binding of its N-terminal to PPAR, preventing the latter's dimerization with retinoid X receptor. Essential for embryonic development. The polypeptide is Deoxyuridine 5'-triphosphate nucleotidohydrolase (Dut) (Mus musculus (Mouse)).